A 777-amino-acid chain; its full sequence is Cullin-3 (777 aa).

Positions 568-596 (YPPPKASMSNEENGPGPSSSGESMKERKP) are disordered. Low complexity predominate over residues 576–589 (SNEENGPGPSSSGE). The 63-residue stretch at 707–769 (DRKLEVEAAI…REYLARDEHD (63 aa)) folds into the Cullin neddylation domain. K721 participates in a covalent cross-link: Glycyl lysine isopeptide (Lys-Gly) (interchain with G-Cter in NEDD8).

It belongs to the cullin family. As to quaternary structure, probable component of multiple cullin-RING-based BCB (BTB-CUL3-BTB) E3 ubiquitin-protein ligase complexes formed by cul-3, rbx-1 and a variable BTB domain-containing protein acting as both, adapter to cullin and substrate recognition component. Interacts with bath-15, bath-40, bath-41, bath-42, C17F4.8, tag-303, D2045.8, F57C2.1, ZC239.15 and B0281.5. Interacts with mel-26 (via BTB domain). Interacts with dcn-1. In terms of processing, neddylated. Deneddylated via its interaction with the COP9 signalosome (CSN) complex.

Its subcellular location is the cytoplasm. It localises to the nucleus. The protein operates within protein modification; protein ubiquitination. Probable core component of multiple cullin-RING-based BCB (BTB-CUL3-BTB) E3 ubiquitin-protein ligase complexes which mediate the ubiquitination and subsequent proteasomal degradation of target proteins. Probably acts as a scaffold protein which may contribute to catalysis through positioning of the substrate and the ubiquitin-conjugating enzyme. Required to target mei-3/katanin for degradation at the meiosis to mitosis transition via its neddylation and deneddylation. Functions in ubiquitin-mediated degradation of CKIs to target cki-1 for degradation. Regulates microtubule stability in the early embryo. In body wall muscles, involved in the organization of myosin thick filaments, likely by regulating the degradation of microtubule severing protein mei-1 downstream of unc-89. Together with spop-1, may promote the ubiquitination and proteasomal degradation of target bromodomain-containing proteins such as bet-1. This is Cullin-3 from Caenorhabditis elegans.